We begin with the raw amino-acid sequence, 104 residues long: Protein P-30 (104 aa).

Pyrrolidone carboxylic acid is present on Gln1. The active-site Proton acceptor is His10. Disulfide bonds link Cys19–Cys68, Cys30–Cys75, Cys48–Cys90, and Cys87–Cys104. Position 31–35 (31–35 (KDKNT)) interacts with substrate. Catalysis depends on His97, which acts as the Proton donor.

The protein belongs to the pancreatic ribonuclease family.

Its function is as follows. Basic protein with antiproliferative/cytotoxic activity against several tumor cell lines in vitro, as well as antitumor in vivo. It exhibits a ribonuclease-like activity against high molecular weight ribosomal RNA. The polypeptide is Protein P-30 (Lithobates pipiens (Northern leopard frog)).